Reading from the N-terminus, the 83-residue chain is MKLKEKMFSCICKPSTIDQSSTTEKYLRFEKKRVGRFNICTVLSNKNLEKAGNFTVIQNVDNEDKIFIIRIINNILQKKNYIR.

This is an uncharacterized protein from Rickettsia prowazekii (strain Madrid E).